The following is a 115-amino-acid chain: Tyrosine-protein phosphatase 24 (115 aa).

Positions 1-115 constitute a Tyrosine-protein phosphatase domain; it reads WMMIVEQKCR…ETGSDAPMVV (115 aa). Residue Asp83 coordinates substrate.

The protein belongs to the protein-tyrosine phosphatase family.

The enzyme catalyses O-phospho-L-tyrosyl-[protein] + H2O = L-tyrosyl-[protein] + phosphate. The protein is Tyrosine-protein phosphatase 24 (STY-24) of Styela plicata (Wrinkled sea squirt).